Consider the following 145-residue polypeptide: UPF0201 protein M164_1168 (145 aa).

It belongs to the UPF0201 family.

The sequence is that of UPF0201 protein M164_1168 from Saccharolobus islandicus (strain M.16.4 / Kamchatka #3) (Sulfolobus islandicus).